The chain runs to 699 residues: eEF1A lysine and N-terminal methyltransferase (699 aa).

M1 bears the N-acetylmethionine mark. Position 267 is a phosphoserine (S267). Residues 433–460 (VSHRAQKKRKKDRKKHRPADTPEDLPAA) form a disordered region. Positions 436–449 (RAQKKRKKDRKKHR) are enriched in basic residues.

It belongs to the methyltransferase superfamily. Forms a tripartite complex containing GAB1, METTL13 and SPRY2. Within the complex interacts with GAB1 and SPRY2.

The protein localises to the cytoplasm. Its subcellular location is the nucleus. It localises to the mitochondrion. The enzyme catalyses L-lysyl-[protein] + S-adenosyl-L-methionine = N(6)-methyl-L-lysyl-[protein] + S-adenosyl-L-homocysteine + H(+). The catalysed reaction is N(6)-methyl-L-lysyl-[protein] + S-adenosyl-L-methionine = N(6),N(6)-dimethyl-L-lysyl-[protein] + S-adenosyl-L-homocysteine + H(+). It carries out the reaction N-terminal glycyl-L-lysyl-L-glutamyl-[protein] + 3 S-adenosyl-L-methionine = N-terminal N,N,N-trimethyl-glycyl-L-lysyl-L-glutamyl-[protein] + 3 S-adenosyl-L-homocysteine + 3 H(+). In terms of biological role, dual methyltransferase that catalyzes methylation of elongation factor 1-alpha (EEF1A1 and EEF1A2) at two different positions, and is therefore involved in the regulation of mRNA translation. Via its C-terminus, methylates EEF1A1 and EEF1A2 at the N-terminal residue 'Gly-2'. Via its N-terminus dimethylates EEF1A1 and EEF1A2 at residue 'Lys-55'. Has no activity towards core histones H2A, H2B, H3 and H4. This is eEF1A lysine and N-terminal methyltransferase (METTL13) from Bos taurus (Bovine).